Consider the following 421-residue polypeptide: Gamma-glutamyl phosphate reductase (421 aa).

It belongs to the gamma-glutamyl phosphate reductase family.

The protein resides in the cytoplasm. It catalyses the reaction L-glutamate 5-semialdehyde + phosphate + NADP(+) = L-glutamyl 5-phosphate + NADPH + H(+). Its pathway is amino-acid biosynthesis; L-proline biosynthesis; L-glutamate 5-semialdehyde from L-glutamate: step 2/2. Catalyzes the NADPH-dependent reduction of L-glutamate 5-phosphate into L-glutamate 5-semialdehyde and phosphate. The product spontaneously undergoes cyclization to form 1-pyrroline-5-carboxylate. The polypeptide is Gamma-glutamyl phosphate reductase (Erythrobacter litoralis (strain HTCC2594)).